Reading from the N-terminus, the 255-residue chain is Thiazole synthase (255 aa).

Residue lysine 95 is the Schiff-base intermediate with DXP of the active site. Residues glycine 156, 182–183 (AG), and 204–205 (NT) each bind 1-deoxy-D-xylulose 5-phosphate.

Belongs to the ThiG family. In terms of assembly, homotetramer. Forms heterodimers with either ThiH or ThiS.

The protein resides in the cytoplasm. It carries out the reaction [ThiS sulfur-carrier protein]-C-terminal-Gly-aminoethanethioate + 2-iminoacetate + 1-deoxy-D-xylulose 5-phosphate = [ThiS sulfur-carrier protein]-C-terminal Gly-Gly + 2-[(2R,5Z)-2-carboxy-4-methylthiazol-5(2H)-ylidene]ethyl phosphate + 2 H2O + H(+). Its pathway is cofactor biosynthesis; thiamine diphosphate biosynthesis. Its function is as follows. Catalyzes the rearrangement of 1-deoxy-D-xylulose 5-phosphate (DXP) to produce the thiazole phosphate moiety of thiamine. Sulfur is provided by the thiocarboxylate moiety of the carrier protein ThiS. In vitro, sulfur can be provided by H(2)S. The sequence is that of Thiazole synthase from Vibrio parahaemolyticus serotype O3:K6 (strain RIMD 2210633).